Here is a 228-residue protein sequence, read N- to C-terminus: Sec-independent protein translocase protein TatB (228 aa).

A helical transmembrane segment spans residues 1-21; the sequence is MFDFGLGELVFVGIIALIVLG. Disordered regions lie at residues 126–162 and 196–228; these read LSDG…AETD and VPHT…VRKS. Positions 206 to 228 are enriched in basic residues; it reads AISRKRGLRPKHRAKPKLRVRKS.

It belongs to the TatB family. As to quaternary structure, the Tat system comprises two distinct complexes: a TatABC complex, containing multiple copies of TatA, TatB and TatC subunits, and a separate TatA complex, containing only TatA subunits. Substrates initially bind to the TatABC complex, which probably triggers association of the separate TatA complex to form the active translocon.

It localises to the cell inner membrane. Functionally, part of the twin-arginine translocation (Tat) system that transports large folded proteins containing a characteristic twin-arginine motif in their signal peptide across membranes. Together with TatC, TatB is part of a receptor directly interacting with Tat signal peptides. TatB may form an oligomeric binding site that transiently accommodates folded Tat precursor proteins before their translocation. In Neisseria meningitidis serogroup C / serotype 2a (strain ATCC 700532 / DSM 15464 / FAM18), this protein is Sec-independent protein translocase protein TatB.